The following is a 101-amino-acid chain: Urease subunit beta (101 aa).

The protein belongs to the urease beta subunit family. As to quaternary structure, heterotrimer of UreA (gamma), UreB (beta) and UreC (alpha) subunits. Three heterotrimers associate to form the active enzyme.

The protein localises to the cytoplasm. It catalyses the reaction urea + 2 H2O + H(+) = hydrogencarbonate + 2 NH4(+). The protein operates within nitrogen metabolism; urea degradation; CO(2) and NH(3) from urea (urease route): step 1/1. The sequence is that of Urease subunit beta from Nostoc punctiforme (strain ATCC 29133 / PCC 73102).